The following is a 58-amino-acid chain: Potassium channel toxin alpha-KTx BmKcug1a (58 aa).

Residues 1–21 form the signal peptide; that stretch reads MKISFLLLLAIVICSIGWTEA. Residue Gln22 is modified to Pyrrolidone carboxylic acid. Cystine bridges form between Cys28–Cys49, Cys34–Cys54, and Cys38–Cys56.

This sequence belongs to the short scorpion toxin superfamily. Potassium channel inhibitor family. Alpha-KTx 01 subfamily. Expressed by the venom gland.

The protein localises to the secreted. Potent blocker of both large-conductance calcium-activated potassium channels (KCa1.1/KCNMA1) and voltage-gated potassium channels (Kv1.3/KCNA3 and ERG1/Kv11.1/KCNH2). The sequence is that of Potassium channel toxin alpha-KTx BmKcug1a from Olivierus martensii (Manchurian scorpion).